We begin with the raw amino-acid sequence, 330 residues long: WRKY transcription factor WRKY51 (330 aa).

The interval 39–61 is disordered; it reads QTGTSERSPAPAPAQEQQQQQQV. Over residues 51-60 the composition is skewed to low complexity; it reads PAQEQQQQQQ. Residues 74-81 carry the Nuclear localization signal motif; that stretch reads FKKVISML. Disordered stretches follow at residues 91–117 and 302–330; these read RGPV…SAVS and YEGE…LPLA. A compositionally biased stretch (low complexity) spans 101–117; that stretch reads PAASEPAPVRSSPSAVS. Residues 245 to 311 constitute a DNA-binding region (WRKY); the sequence is KVADIPADDF…YEGEHRHTPS (67 aa). The segment covering 318-330 has biased composition (pro residues); that stretch reads PPAPPPPLALPLA.

It belongs to the WRKY group II-a family. Highly expressed in aleurone cells. In seeds, predominantly present in the plumule, radicle and scutellum of the embryo.

The protein localises to the nucleus. Its function is as follows. Transcription factor. Interacts, when in complex with WRKY71, specifically with the W box (5'-(T)TGAC[CT]-3'), a frequently occurring elicitor-responsive cis-acting element. Represses specifically gibberellic acid (GA)-induced promoters in aleurone cells, probably by interfering with GAM1. This Oryza sativa subsp. indica (Rice) protein is WRKY transcription factor WRKY51.